Reading from the N-terminus, the 134-residue chain is Protein Turandot E (134 aa).

Positions 1–38 are cleaved as a signal peptide; that stretch reads MSYNRTLHSTTSILKMNSALQISCLLLVLGCLLGSGHG.

This sequence belongs to the Turandot family.

Its subcellular location is the secreted. Functionally, a humoral factor that may play a role in stress tolerance. The polypeptide is Protein Turandot E (Drosophila yakuba (Fruit fly)).